A 747-amino-acid polypeptide reads, in one-letter code: Internal virion protein gp15 (747 aa).

It belongs to the T7virus internal virion protein gp15 family. In terms of assembly, homooctamer. Interacts with gp16; after ejection the gp15-gp16 complex composed of a gp15 octamer and a gp16 tetramer probably binds both the viral DNA and the host inner membrane. Interacts with gp14.

The protein localises to the virion. The protein resides in the host periplasm. Functionally, component of the cylindrical core that assembles on the inner surface of the capsid during capsid formation and plays a role in viral DNA ejection into the host cell. The inner core is composed of stacked rings of gp14, gp15 and gp16 proteins. Following binding to the host cell surface, the internal core is disassembled and gp15 is ejected along with gp14 and gp16 into the infected cell. Gp15 probably remains associated with gp16. The gp15-gp16 complex binds to both the viral DNA and the host inner membrane, probably escorting the leading end of the genome through the periplasm and controlling the extend of DNA translocated into the host cell. This Escherichia phage T7 (Bacteriophage T7) protein is Internal virion protein gp15.